A 99-amino-acid polypeptide reads, in one-letter code: Putative GIY-YIG domain-containing protein 242L (99 aa).

The region spanning 5–81 is the GIY-YIG domain; that stretch reads NGWNIYMVTM…KKQTKKVKLQ (77 aa).

This is Putative GIY-YIG domain-containing protein 242L from Invertebrate iridescent virus 6 (IIV-6).